A 640-amino-acid polypeptide reads, in one-letter code: 1-deoxy-D-xylulose-5-phosphate synthase (640 aa).

Thiamine diphosphate is bound by residues histidine 79 and 120 to 122 (AHA). Residue aspartate 151 coordinates Mg(2+). Thiamine diphosphate is bound by residues 152–153 (GS), asparagine 180, tyrosine 287, and glutamate 369. Asparagine 180 is a binding site for Mg(2+).

The protein belongs to the transketolase family. DXPS subfamily. Homodimer. Mg(2+) serves as cofactor. Thiamine diphosphate is required as a cofactor.

The catalysed reaction is D-glyceraldehyde 3-phosphate + pyruvate + H(+) = 1-deoxy-D-xylulose 5-phosphate + CO2. Its pathway is metabolic intermediate biosynthesis; 1-deoxy-D-xylulose 5-phosphate biosynthesis; 1-deoxy-D-xylulose 5-phosphate from D-glyceraldehyde 3-phosphate and pyruvate: step 1/1. Its function is as follows. Catalyzes the acyloin condensation reaction between C atoms 2 and 3 of pyruvate and glyceraldehyde 3-phosphate to yield 1-deoxy-D-xylulose-5-phosphate (DXP). The chain is 1-deoxy-D-xylulose-5-phosphate synthase from Hyphomonas neptunium (strain ATCC 15444).